Consider the following 355-residue polypeptide: tRNA uridine(34) hydroxylase (355 aa).

The region spanning 146-240 (DDPDTVFVDM…YARQAKAQGL (95 aa)) is the Rhodanese domain. Residue Cys-200 is the Cysteine persulfide intermediate of the active site.

The protein belongs to the TrhO family.

The enzyme catalyses uridine(34) in tRNA + AH2 + O2 = 5-hydroxyuridine(34) in tRNA + A + H2O. Functionally, catalyzes oxygen-dependent 5-hydroxyuridine (ho5U) modification at position 34 in tRNAs. In Pectobacterium carotovorum subsp. carotovorum (strain PC1), this protein is tRNA uridine(34) hydroxylase.